Reading from the N-terminus, the 201-residue chain is Small ribosomal subunit protein uS4B (201 aa).

The 64-residue stretch at 93–156 (QRLDTVVYRL…RSLAVVRESL (64 aa)) folds into the S4 RNA-binding domain.

The protein belongs to the universal ribosomal protein uS4 family. In terms of assembly, part of the 30S ribosomal subunit. Contacts protein S5. The interaction surface between S4 and S5 is involved in control of translational fidelity.

One of the primary rRNA binding proteins, it binds directly to 16S rRNA where it nucleates assembly of the body of the 30S subunit. In terms of biological role, with S5 and S12 plays an important role in translational accuracy. In Symbiobacterium thermophilum (strain DSM 24528 / JCM 14929 / IAM 14863 / T), this protein is Small ribosomal subunit protein uS4B.